A 381-amino-acid polypeptide reads, in one-letter code: Secretion apparatus protein BsaZ (381 aa).

A run of 4 helical transmembrane segments spans residues 28 to 48 (IVAL…VDLT), 80 to 100 (IAAP…LVQS), 134 to 154 (AVKA…FADL), and 175 to 195 (IVLT…VLIV). Positions 343–381 (NRGGPPREMPPEATHAPDAHGGDAASGGATSAQAGERNA) are disordered. Residues 364–381 (GDAASGGATSAQAGERNA) are compositionally biased toward low complexity.

This sequence belongs to the type III secretion exporter family.

The protein resides in the cell membrane. Functionally, part of the bsa type III secretion system, is involved in the intracellular replication of invading bacteria inside the host cell. Probably necessary for the lysis of the vacuole membrane and escape into the host cell cytoplasm. The sequence is that of Secretion apparatus protein BsaZ (bsaZ) from Burkholderia thailandensis (strain ATCC 700388 / DSM 13276 / CCUG 48851 / CIP 106301 / E264).